Reading from the N-terminus, the 642-residue chain is Threonine--tRNA ligase (642 aa).

Residues 1-61 (MPIITLPDGS…EEDASLEIIT (61 aa)) enclose the TGS domain. The segment at 244–535 (DHRKIGKQLD…LIEEYAGFFP (292 aa)) is catalytic. Zn(2+)-binding residues include C335, H386, and H512.

Belongs to the class-II aminoacyl-tRNA synthetase family. In terms of assembly, homodimer. Zn(2+) is required as a cofactor.

It localises to the cytoplasm. It carries out the reaction tRNA(Thr) + L-threonine + ATP = L-threonyl-tRNA(Thr) + AMP + diphosphate + H(+). Its function is as follows. Catalyzes the attachment of threonine to tRNA(Thr) in a two-step reaction: L-threonine is first activated by ATP to form Thr-AMP and then transferred to the acceptor end of tRNA(Thr). Also edits incorrectly charged L-seryl-tRNA(Thr). In Vibrio vulnificus (strain YJ016), this protein is Threonine--tRNA ligase.